We begin with the raw amino-acid sequence, 423 residues long: Acaloleptin A (423 aa).

Residues 1-17 form the signal peptide; the sequence is MITKISLILFAVLLVSG. A propeptide spanning residues 18 to 26 is cleaved from the precursor; the sequence is LEEEERWKR. Disordered stretches follow at residues 28 to 58, 108 to 128, 180 to 203, and 355 to 385; these read LQPGAPNVNNNDQPWQVSPHISRDDSGNTKT, INNKDQPWQVSPHISRDDNGN, NVNNKDQPWQVSPHISRDDSGNTR, and SDDEDEEEEEDQPWQLNPNIARGDDGNTRAD. The segment covering 34–43 has biased composition (polar residues); sequence NVNNNDQPWQ. Residues 180 to 189 are compositionally biased toward polar residues; it reads NVNNKDQPWQ. Over residues 357–366 the composition is skewed to acidic residues; it reads DEDEEEEEDQ. Basic and acidic residues predominate over residues 376-385; it reads RGDDGNTRAD.

This sequence belongs to the coleoptericin family. Hemolymph (at protein level). Larval fat body.

The protein localises to the secreted. Functionally, acaloleptins A1-A4 show antibacterial activity against Gram-negative bacteria but not against Gram-positive bacteria. Acaloleptin A5 shows antibacterial activity against Gram-positive bacteria but not against Gram-negative bacteria, and may also have antifungal activity. This Acalolepta luxuriosa (Udo longhorn beetle) protein is Acaloleptin A.